A 311-amino-acid chain; its full sequence is 4-diphosphocytidyl-2-C-methyl-D-erythritol kinase (311 aa).

The active site involves K16. An ATP-binding site is contributed by 100-110 (PIGAGLAGGSS). D142 is a catalytic residue.

The protein belongs to the GHMP kinase family. IspE subfamily.

It catalyses the reaction 4-CDP-2-C-methyl-D-erythritol + ATP = 4-CDP-2-C-methyl-D-erythritol 2-phosphate + ADP + H(+). It participates in isoprenoid biosynthesis; isopentenyl diphosphate biosynthesis via DXP pathway; isopentenyl diphosphate from 1-deoxy-D-xylulose 5-phosphate: step 3/6. Catalyzes the phosphorylation of the position 2 hydroxy group of 4-diphosphocytidyl-2C-methyl-D-erythritol. This chain is 4-diphosphocytidyl-2-C-methyl-D-erythritol kinase, found in Prochlorococcus marinus (strain MIT 9215).